Consider the following 222-residue polypeptide: Proteoglycan 3 (222 aa).

An N-terminal signal peptide occupies residues 1 to 17; it reads MKQPLILSFLLLGMVSA. Basic and acidic residues predominate over residues 27 to 46; sequence NPKREESLKQEADGSREQGR. Residues 27-100 form a disordered region; the sequence is NPKREESLKQ…PKEEDTTHFQ (74 aa). Acidic residues predominate over residues 71 to 81; that stretch reads FEDEEAMESDP. Residues 83-97 show a composition bias toward basic and acidic residues; the sequence is ALNKDSACPKEEDTT. One can recognise a C-type lectin domain in the interval 105 to 221; the sequence is CKSCNYVLVR…CKSHLPFICS (117 aa). 2 cysteine pairs are disulfide-bonded: C126/C220 and C197/C212.

Expressed in bone marrow, spleen, and thymus. Not detected in heart, liver or lung.

In terms of biological role, possesses similar cytotoxic and cytostimulatory activities to PRG2/MBP. This chain is Proteoglycan 3, found in Mus musculus (Mouse).